The primary structure comprises 328 residues: 4-hydroxythreonine-4-phosphate dehydrogenase (328 aa).

Substrate is bound by residues His134 and Thr135. The a divalent metal cation site is built by His164, His209, and His265. Substrate-binding residues include Lys273, Asn282, and Arg291.

It belongs to the PdxA family. As to quaternary structure, homodimer. Zn(2+) is required as a cofactor. Mg(2+) serves as cofactor. The cofactor is Co(2+).

It is found in the cytoplasm. It carries out the reaction 4-(phosphooxy)-L-threonine + NAD(+) = 3-amino-2-oxopropyl phosphate + CO2 + NADH. The protein operates within cofactor biosynthesis; pyridoxine 5'-phosphate biosynthesis; pyridoxine 5'-phosphate from D-erythrose 4-phosphate: step 4/5. Its function is as follows. Catalyzes the NAD(P)-dependent oxidation of 4-(phosphooxy)-L-threonine (HTP) into 2-amino-3-oxo-4-(phosphooxy)butyric acid which spontaneously decarboxylates to form 3-amino-2-oxopropyl phosphate (AHAP). This is 4-hydroxythreonine-4-phosphate dehydrogenase from Vibrio vulnificus (strain CMCP6).